The chain runs to 547 residues: MFS-type transporter M6 (547 aa).

Residues 1 to 45 (MHRRRRDNLMTPAEMVASMKPPQSLSTEDDDGSRRDSESSADVLK) form a disordered region. The helical transmembrane segment at 81-101 (VLVVASFAAAISPFSTSTYYP) threads the bilayer. N118 is a glycosylation site (N-linked (GlcNAc...) asparagine). Residues 146 to 166 (PMFLVCFAIYFVANVGLALQN) form a helical membrane-spanning segment. An N-linked (GlcNAc...) asparagine glycan is attached at N167. 2 helical membrane-spanning segments follow: residues 206-226 (LIYA…IGGL) and 236-256 (VFWF…IFFG). An N-linked (GlcNAc...) asparagine glycan is attached at N274. 5 helical membrane-spanning segments follow: residues 317 to 337 (FILS…TSVL), 347 to 367 (YDAV…LLAY), 407 to 427 (LGFV…YGWQ), 432 to 452 (APLA…TGVM), and 469 to 489 (AVGA…VAVV). N-linked (GlcNAc...) asparagine glycosylation is present at N493. A helical transmembrane segment spans residues 496 to 516 (AGIGWTATVTAGLWVLMMPTL).

Belongs to the major facilitator superfamily. CAR1 family.

Its subcellular location is the membrane. Functionally, MFS-type transporter; part of the gene cluster that mediates the biosynthesis of squalestatin S1 (SQS1, also known as zaragozic acid A), a heavily oxidized fungal polyketide that offers potent cholesterol lowering activity by targeting squalene synthase (SS). The sequence is that of MFS-type transporter M6 from Phoma sp. (strain ATCC 20986 / MF5453).